The following is a 520-amino-acid chain: Arginine biosynthesis bifunctional protein ArgJ, chloroplastic (520 aa).

Residues T264, K290, T301, E388, N515, and T520 each contribute to the substrate site. The Nucleophile role is filled by T301.

The protein belongs to the ArgJ family. Heterodimer of an alpha and a beta chain.

It localises to the plastid. It is found in the chloroplast. The enzyme catalyses N(2)-acetyl-L-ornithine + L-glutamate = N-acetyl-L-glutamate + L-ornithine. It carries out the reaction L-glutamate + acetyl-CoA = N-acetyl-L-glutamate + CoA + H(+). Its pathway is amino-acid biosynthesis; L-arginine biosynthesis; L-ornithine and N-acetyl-L-glutamate from L-glutamate and N(2)-acetyl-L-ornithine (cyclic): step 1/1. It functions in the pathway amino-acid biosynthesis; L-arginine biosynthesis; N(2)-acetyl-L-ornithine from L-glutamate: step 1/4. Functionally, catalyzes two activities which are involved in the cyclic version of arginine biosynthesis: the synthesis of acetylglutamate from glutamate and acetyl-CoA, and of ornithine by transacetylation between acetylornithine and glutamate. The protein is Arginine biosynthesis bifunctional protein ArgJ, chloroplastic of Physcomitrium patens (Spreading-leaved earth moss).